A 162-amino-acid chain; its full sequence is Ribonuclease P protein component (162 aa).

Positions 1-63 (MDEKDLATQP…PPAAGGKLLS (63 aa)) are disordered. Residues 21-38 (GPHEDPRRQEGVEAEKAE) show a composition bias toward basic and acidic residues.

This sequence belongs to the RnpA family. In terms of assembly, consists of a catalytic RNA component (M1 or rnpB) and a protein subunit.

It carries out the reaction Endonucleolytic cleavage of RNA, removing 5'-extranucleotides from tRNA precursor.. Its function is as follows. RNaseP catalyzes the removal of the 5'-leader sequence from pre-tRNA to produce the mature 5'-terminus. It can also cleave other RNA substrates such as 4.5S RNA. The protein component plays an auxiliary but essential role in vivo by binding to the 5'-leader sequence and broadening the substrate specificity of the ribozyme. The chain is Ribonuclease P protein component from Thermus scotoductus.